Reading from the N-terminus, the 270-residue chain is HTH-type transcriptional repressor DrrR1 (270 aa).

Over residues 1-11 (MESGTSRTSDT) the composition is skewed to low complexity. The tract at residues 1–28 (MESGTSRTSDTGGTGRAGSTETSGSGDI) is disordered. Residues 49–109 (TLTLDRVVEA…LMLDRVQRPS (61 aa)) enclose the HTH tetR-type domain. Positions 72 to 91 (SMRRVAAELGTGTMSLYRYV) form a DNA-binding region, H-T-H motif.

Its subcellular location is the cytoplasm. Daunorubicin and doxorubicin can induce dissociation of DrrR1 from its DNA complex. Ampicillin cannot release DrrR1 from the DNA complex at the same concentrations. Transcriptional regulator that modulates the expression of the drrA2-drrB2 genes, which encode an ABC transporter involved in daunorubicin efflux, in response to intracellular daunorubicin/doxorubicin accumulation. In the absence of daunorubicin or doxorubicin, binds directly to the drrA2-drrB2 promoter region and negatively regulates expression of the genes. In the presence of daunorubicin or doxorubicin, DrrR1 dissociates from DNA, leading to the transcription of the genes. The chain is HTH-type transcriptional repressor DrrR1 from Streptomyces coeruleorubidus.